A 145-amino-acid chain; its full sequence is D-aminoacyl-tRNA deacylase (145 aa).

The Gly-cisPro motif, important for rejection of L-amino acids signature appears at 137-138 (GP).

The protein belongs to the DTD family. As to quaternary structure, homodimer.

The protein resides in the cytoplasm. It carries out the reaction glycyl-tRNA(Ala) + H2O = tRNA(Ala) + glycine + H(+). It catalyses the reaction a D-aminoacyl-tRNA + H2O = a tRNA + a D-alpha-amino acid + H(+). In terms of biological role, an aminoacyl-tRNA editing enzyme that deacylates mischarged D-aminoacyl-tRNAs. Also deacylates mischarged glycyl-tRNA(Ala), protecting cells against glycine mischarging by AlaRS. Acts via tRNA-based rather than protein-based catalysis; rejects L-amino acids rather than detecting D-amino acids in the active site. By recycling D-aminoacyl-tRNA to D-amino acids and free tRNA molecules, this enzyme counteracts the toxicity associated with the formation of D-aminoacyl-tRNA entities in vivo and helps enforce protein L-homochirality. This Legionella pneumophila (strain Paris) protein is D-aminoacyl-tRNA deacylase.